A 272-amino-acid polypeptide reads, in one-letter code: MRYAVLVTGPAGAGKSTFCASLITHAQTIGRSVHLVNLDPAADKFEYEPTIDIRDLINLEDVMEELEFGPNGGLIYCFEYLLNNLDWLEDELGAYEDDYLIIDCPGQIELYTHVPLLPRLATFLSTSLNFRTSAVYLIDSQFMQDKSKFFAGVMSAMSCMLSLGISMLCLMSKMDLVKDKKGRTKREVGRYLDPDPNLLLEDINQGTNSKFNQLNRAVVSLIEDQNIVSFLPLDVTSEDSVNTVLSHIDNMMQYGEDEEPKVPKDMDDGDFD.

12–17 (GAGKST) lines the GTP pocket. The short motif at 69 to 71 (GPN) is the Gly-Pro-Asn (GPN)-loop; involved in dimer interface element. 172–175 (SKMD) provides a ligand contact to GTP. The segment at 253-272 (QYGEDEEPKVPKDMDDGDFD) is disordered.

It belongs to the GPN-loop GTPase family. As to quaternary structure, heterodimers with GPN1 or GPN2. Binds to RNA polymerase II (RNAPII).

In terms of biological role, small GTPase required for proper nuclear import of RNA polymerase II and III (RNAPII and RNAPIII). May act at an RNAP assembly step prior to nuclear import. The chain is GPN-loop GTPase 3 from Cryptococcus neoformans var. neoformans serotype D (strain JEC21 / ATCC MYA-565) (Filobasidiella neoformans).